Reading from the N-terminus, the 153-residue chain is Small ribosomal subunit protein uS19A (153 aa).

It belongs to the universal ribosomal protein uS19 family. In terms of assembly, component of the small ribosomal subunit (SSU). Mature yeast ribosomes consist of a small (40S) and a large (60S) subunit. The 40S small subunit contains 1 molecule of ribosomal RNA (18S rRNA) and at least 33 different proteins. The large 60S subunit contains 3 rRNA molecules (25S, 5.8S and 5S rRNA) and at least 46 different proteins.

The protein resides in the cytoplasm. Its subcellular location is the nucleus. The protein localises to the nucleolus. Component of the ribosome, a large ribonucleoprotein complex responsible for the synthesis of proteins in the cell. The small ribosomal subunit (SSU) binds messenger RNAs (mRNAs) and translates the encoded message by selecting cognate aminoacyl-transfer RNA (tRNA) molecules. The large subunit (LSU) contains the ribosomal catalytic site termed the peptidyl transferase center (PTC), which catalyzes the formation of peptide bonds, thereby polymerizing the amino acids delivered by tRNAs into a polypeptide chain. The nascent polypeptides leave the ribosome through a tunnel in the LSU and interact with protein factors that function in enzymatic processing, targeting, and the membrane insertion of nascent chains at the exit of the ribosomal tunnel. uS19 is involved in the nuclear export of the small ribosomal subunit precursor. Has a role in the late stage of the assembly of pre-40S particles within the nucleus and controls their export to the cytoplasm. The chain is Small ribosomal subunit protein uS19A (rps1501) from Schizosaccharomyces pombe (strain 972 / ATCC 24843) (Fission yeast).